A 350-amino-acid polypeptide reads, in one-letter code: MELVALCRTGFEKELAAELVDVTATHGVHGYPKARDGQGYVQFVVDDGAELLRCINAVVFDELVFVRDWFVSAGAISGLPADDRVSPLQNQFKAAFSGHIQEVADLLFLNVDSNEGKALSKLTRGVGSHLKRQLPLAKGSDWLGVLLLLSGSEGFIGVCPRRQRPRWAGGVARLKFPREAPSRATLKLEEAWHHFIPASEWDTRLAPSMKAVDLGAAPGGWTWQLVARSMFVDAVDNGPMAPTLMEGGQVTHRQVDGFAYHPPKPVDWLVCDIADKPARVADMIASWAENSWFREAVFNLKLPMKQRYKEVLRCREQIELRLLAAGRDYRLRFKQLYHDREEVTGHLELR.

S-adenosyl-L-methionine is bound by residues 217–220 (APGG), Asp236, Asp256, and Asp272. The active-site Proton acceptor is Lys301.

It belongs to the class I-like SAM-binding methyltransferase superfamily. RNA methyltransferase RlmE family. RlmM subfamily. Monomer.

Its subcellular location is the cytoplasm. It carries out the reaction cytidine(2498) in 23S rRNA + S-adenosyl-L-methionine = 2'-O-methylcytidine(2498) in 23S rRNA + S-adenosyl-L-homocysteine + H(+). Its function is as follows. Catalyzes the 2'-O-methylation at nucleotide C2498 in 23S rRNA. The sequence is that of Ribosomal RNA large subunit methyltransferase M from Teredinibacter turnerae (strain ATCC 39867 / T7901).